Consider the following 175-residue polypeptide: Alkyl hydroperoxide reductase AhpD (175 aa).

Cys131 serves as the catalytic Proton donor. A disulfide bridge connects residues Cys131 and Cys134. The active-site Cysteine sulfenic acid (-SOH) intermediate is the Cys134.

The protein belongs to the AhpD family.

It carries out the reaction N(6)-[(R)-dihydrolipoyl]-L-lysyl-[lipoyl-carrier protein] + a hydroperoxide = N(6)-[(R)-lipoyl]-L-lysyl-[lipoyl-carrier protein] + an alcohol + H2O. Its function is as follows. Antioxidant protein with alkyl hydroperoxidase activity. Required for the reduction of the AhpC active site cysteine residues and for the regeneration of the AhpC enzyme activity. The sequence is that of Alkyl hydroperoxide reductase AhpD from Brucella anthropi (strain ATCC 49188 / DSM 6882 / CCUG 24695 / JCM 21032 / LMG 3331 / NBRC 15819 / NCTC 12168 / Alc 37) (Ochrobactrum anthropi).